The following is a 55-amino-acid chain: Protein CADMIUM TOLERANCE 1 (55 aa).

Residues 24 to 40 form a helical membrane-spanning segment; that stretch reads GCLYACIFTALCCFCCY.

Belongs to the CYSTM1 family. As to expression, expressed in roots and shoots.

It localises to the cell membrane. It is found in the secreted. The protein localises to the cell wall. Confers resistance to heavy metal ions (e.g. cadmium (CdCl(2)) and copper (CuCl(2))) by chelating them at the plasma membrane of root cells, thus stopping their entry and reducing their accumulation. Binds to aluminium (Al). The sequence is that of Protein CADMIUM TOLERANCE 1 from Oryza sativa subsp. japonica (Rice).